The sequence spans 488 residues: DELTA-alicitoxin-Pse2b (488 aa).

The N-terminal stretch at 1 to 21 (MSKPIIFLLTAFVVLTDLGAT) is a signal peptide. An MACPF domain is found at 24–344 (TEKVEVKAKP…GYLNFDCAYE (321 aa)). The EGF-like domain maps to 369–398 (VCKLGPEGCHSDDDCESDDLIYCACCGDSC). Disulfide bonds link C370–C383, C377–C391, and C393–C398.

The protein localises to the secreted. Its subcellular location is the nematocyst. In terms of biological role, causes lethal toxicity to the shrimp Palaemon paucidence, and hemolytic activity toward sheep red blood cells. This chain is DELTA-alicitoxin-Pse2b, found in Phyllodiscus semoni (Night anemone).